Reading from the N-terminus, the 137-residue chain is L-ectoine synthase (137 aa).

Positions 118 to 137 are disordered; it reads VHREDGSYAPADEADDQKPL.

It belongs to the ectoine synthase family.

The enzyme catalyses (2S)-4-acetamido-2-aminobutanoate = L-ectoine + H2O. It participates in amine and polyamine biosynthesis; ectoine biosynthesis; L-ectoine from L-aspartate 4-semialdehyde: step 3/3. Its activity is regulated as follows. Seems to require potassium ions for its activity and stability. Slightly inhibited by N-ethylmaleimide. Its function is as follows. Catalyzes the circularization of gamma-N-acetyl-alpha,gamma-diaminobutyric acid (ADABA) to ectoine (1,4,5,6-tetrahydro-2-methyl-4-pyrimidine carboxylic acid), which is an excellent osmoprotectant. Does not act on N-acetylated amino acids like N-alpha-acetyl-L-asparagine,N-alpha-acetyl-L-ornithine, N-alpha-acetyl-L-lysine and N-epsilon-acetyl-L-lysine. The protein is L-ectoine synthase (ectC) of Halomonas elongata (strain ATCC 33173 / DSM 2581 / NBRC 15536 / NCIMB 2198 / 1H9).